The chain runs to 802 residues: Copper-exporting P-type ATPase (802 aa).

HMA domains lie at 5–71 (KEIA…YHVV) and 73–139 (EKAE…YKLK). Positions 16, 19, 84, and 87 each coordinate Cu(+). The next 6 membrane-spanning stretches (helical) occupy residues 162–181 (LIFSAVLSFPLLWAMVSHFT), 196–218 (WMQFALATPVQFLIGWPFYVGAY), 230–249 (VLVALGTTAAYAYSLYLTFQ), 259–278 (GLYYETSAILLTLILLGKLF), 412–434 (ISGIFVPIVLGIAVLTFLIWYLW), and 447–469 (FIAVLVIACPCALGLATPTSIMA). Aspartate 499 serves as the catalytic 4-aspartylphosphate intermediate. Positions 698 and 702 each coordinate Mg(2+). The next 2 helical transmembrane spans lie at 756-775 (LFWALGYNSLGIPIAALGFL) and 779-796 (IAGAAMAFSSVSVVLNAL).

Belongs to the cation transport ATPase (P-type) (TC 3.A.3) family. Type IB subfamily. As to quaternary structure, monomer at sub-stoichiometric copper concentrations. Homodimer at higher copper concentrations. Forms a heterodimer (electrostatic interactions) with CopZ during the transfer of Cu(+).

The protein localises to the cell membrane. The catalysed reaction is Cu(+)(in) + ATP + H2O = Cu(+)(out) + ADP + phosphate + H(+). Involved in copper export. This is Copper-exporting P-type ATPase (copA) from Bacillus subtilis (strain 168).